We begin with the raw amino-acid sequence, 157 residues long: N-acetylgalactosamine-specific phosphotransferase enzyme IIB component 2 (157 aa).

Residues 1–157 form the PTS EIIB type-4 domain; sequence MPNIVLSRID…EPAVDLFKLL (157 aa). H15 functions as the Pros-phosphohistidine intermediate in the catalytic mechanism.

Its subcellular location is the cytoplasm. Its function is as follows. The phosphoenolpyruvate-dependent sugar phosphotransferase system (sugar PTS), a major carbohydrate active -transport system, catalyzes the phosphorylation of incoming sugar substrates concomitantly with their translocation across the cell membrane. This system is involved in N-acetylgalactosamine transport. The protein is N-acetylgalactosamine-specific phosphotransferase enzyme IIB component 2 (agaV) of Escherichia coli (strain K12).